A 157-amino-acid polypeptide reads, in one-letter code: uncharacterized protein (157 aa).

An HD domain is found at 33-134; it reads NLKHFLDVAR…MYRADKLSRL (102 aa).

This is an uncharacterized protein from Clostridium beijerinckii (strain ATCC 51743 / NCIMB 8052) (Clostridium acetobutylicum).